Reading from the N-terminus, the 393-residue chain is Cobalt-precorrin-5B C(1)-methyltransferase (393 aa).

The segment at 1–35 (MSDETRVGEAAEQAATPEKIRKGSARRERGNRTGF) is disordered. Basic and acidic residues predominate over residues 18–31 (EKIRKGSARRERGN).

Belongs to the CbiD family.

It catalyses the reaction Co-precorrin-5B + S-adenosyl-L-methionine = Co-precorrin-6A + S-adenosyl-L-homocysteine. It functions in the pathway cofactor biosynthesis; adenosylcobalamin biosynthesis; cob(II)yrinate a,c-diamide from sirohydrochlorin (anaerobic route): step 6/10. In terms of biological role, catalyzes the methylation of C-1 in cobalt-precorrin-5B to form cobalt-precorrin-6A. This Dechloromonas aromatica (strain RCB) protein is Cobalt-precorrin-5B C(1)-methyltransferase.